We begin with the raw amino-acid sequence, 473 residues long: Glutamine synthetase (473 aa).

The 86-residue stretch at 15-100 (ENIKIIDLKF…ICSIKEPRTG (86 aa)) folds into the GS beta-grasp domain. The 367-residue stretch at 107–473 (PRTIAAKAVE…PYEFSLYYDC (367 aa)) folds into the GS catalytic domain. Glu-132 contacts Mn(2+). Glu-134 contacts Mg(2+). Glu-210 serves as a coordination point for ATP. Residues Glu-215 and Glu-223 each coordinate Mg(2+). L-glutamate-binding positions include 267 to 268 (NG) and Gly-268. His-272 is a binding site for Mg(2+). ATP-binding positions include 274 to 276 (HQS) and Ser-276. Arg-324, Glu-330, and Arg-342 together coordinate L-glutamate. Arg-342, Arg-347, and Lys-356 together coordinate ATP. Glu-361 is a Mn(2+) binding site. Arg-363 is a binding site for L-glutamate. The residue at position 401 (Tyr-401) is an O-AMP-tyrosine.

This sequence belongs to the glutamine synthetase family. As to quaternary structure, oligomer of 12 subunits arranged in the form of two hexagons. It depends on Mg(2+) as a cofactor.

It localises to the cytoplasm. The enzyme catalyses L-glutamate + NH4(+) + ATP = L-glutamine + ADP + phosphate + H(+). With respect to regulation, inhibited by ADP (90%), AMP (80%), alanine (52%) and aspartate (41%). The activity of this enzyme could be controlled by adenylation under conditions of abundant glutamine. Involved in nitrogen metabolism via ammonium assimilation. Catalyzes the ATP-dependent biosynthesis of glutamine from glutamate and ammonia. This Synechocystis sp. (strain ATCC 27184 / PCC 6803 / Kazusa) protein is Glutamine synthetase.